The following is an 807-amino-acid chain: Glycerol-3-phosphate acyltransferase (807 aa).

Positions 308-313 (CHRSHM) match the HXXXXD motif motif.

The protein belongs to the GPAT/DAPAT family.

The protein resides in the cell inner membrane. It carries out the reaction sn-glycerol 3-phosphate + an acyl-CoA = a 1-acyl-sn-glycero-3-phosphate + CoA. The protein operates within phospholipid metabolism; CDP-diacylglycerol biosynthesis; CDP-diacylglycerol from sn-glycerol 3-phosphate: step 1/3. This Shewanella woodyi (strain ATCC 51908 / MS32) protein is Glycerol-3-phosphate acyltransferase.